Here is a 360-residue protein sequence, read N- to C-terminus: 3-dehydroquinate synthase (360 aa).

NAD(+)-binding positions include 104-108 (GVIGD), 128-129 (TT), lysine 141, and 168-171 (FLDT). Zn(2+) is bound by residues glutamate 183, histidine 243, and histidine 260.

The protein belongs to the sugar phosphate cyclases superfamily. Dehydroquinate synthase family. The cofactor is Co(2+). Zn(2+) serves as cofactor. Requires NAD(+) as cofactor.

It localises to the cytoplasm. The enzyme catalyses 7-phospho-2-dehydro-3-deoxy-D-arabino-heptonate = 3-dehydroquinate + phosphate. It participates in metabolic intermediate biosynthesis; chorismate biosynthesis; chorismate from D-erythrose 4-phosphate and phosphoenolpyruvate: step 2/7. Functionally, catalyzes the conversion of 3-deoxy-D-arabino-heptulosonate 7-phosphate (DAHP) to dehydroquinate (DHQ). This chain is 3-dehydroquinate synthase, found in Streptococcus equi subsp. equi (strain 4047).